The primary structure comprises 297 residues: 4-hydroxy-tetrahydrodipicolinate synthase (297 aa).

Thr-49 provides a ligand contact to pyruvate. Tyr-137 acts as the Proton donor/acceptor in catalysis. Catalysis depends on Lys-166, which acts as the Schiff-base intermediate with substrate. Ile-208 contributes to the pyruvate binding site.

Belongs to the DapA family. Homotetramer; dimer of dimers.

It is found in the cytoplasm. The catalysed reaction is L-aspartate 4-semialdehyde + pyruvate = (2S,4S)-4-hydroxy-2,3,4,5-tetrahydrodipicolinate + H2O + H(+). Its pathway is amino-acid biosynthesis; L-lysine biosynthesis via DAP pathway; (S)-tetrahydrodipicolinate from L-aspartate: step 3/4. Functionally, catalyzes the condensation of (S)-aspartate-beta-semialdehyde [(S)-ASA] and pyruvate to 4-hydroxy-tetrahydrodipicolinate (HTPA). This is 4-hydroxy-tetrahydrodipicolinate synthase from Chlorobium phaeobacteroides (strain BS1).